A 970-amino-acid polypeptide reads, in one-letter code: MLQLRLLPTFSMGCHLLAVVALLFSHVDLISAETEMEGEGNETGECTGSYYCKKGVILPIWEPQDPSFGDKIARATVYFVAMVYMFLGVSIIADRFMSSIEVITSQEKEITIKKPNGETTKTTVRIWNETVSNLTLMALGSSAPEILLSVIEVCGHNFTAGDLGPSTIVGSAAFNMFIIIALCVYVVPDGETRKIKHLRVFFVTAAWSIFAYTWLYIILSVISPGVVEVWEGLLTFFFFPICVVFAWVADRRLLFYKYVYKRYRAGKQRGMIIEHEGDRPSSKTEIEMDGKVVNSHVDNFLDGALVLEVDERDQDDEEARREMARILKELKQKHPEKEIEQLIELANYQVLSQQQKSRAFYRIQATRLMTGAGNILKRHAADQARKAVSMHEVNTEVAENDPVSKIFFEQGTYQCLENCGTVALTIIRRGGDLTNTVFVDFRTEDGTANAGSDYEFTEGTVVFKPGETQKEIRVGIIDDDIFEEDENFLVHLSNVKVSSEASEDGILEANHVSALACLGSPSTATVTIFDDDHAGIFTFEEPVTHVSESIGIMEVKVLRTSGARGNVIVPYKTIEGTARGGGEDFEDTCGELEFQNDEIVKTISVKVIDDEEYEKNKTFFLEIGEPRLVEMSEKKALLLNELGGFTITGKYLYGQPVFRKVHAREHPIPSTVITIAEEYDDKQPLTSKEEEERRIAEMGRPILGEHTKLEVIIEESYEFKSTVDKLIKKTNLALVVGTNSWREQFIEAITVSAGEDDDDDECGEEKLPSCFDYVMHFLTVFWKVLFAFVPPTEYWNGWACFIVSILMIGILTAFIGDLASHFGCTIGLKDSVTAVVFVALGTSVPDTFASKVAATQDQYADASIGNVTGSNAVNVFLGIGVAWSIAAIYHAANGEQFKVSPGTLAFSVTLFTIFAFINVGVLLYRRRPEIGGELGGPRTAKLLTSCLFVLLWLLYIFFSSLEAYCHIKGF.

Residues 1–32 form the signal peptide; sequence MLQLRLLPTFSMGCHLLAVVALLFSHVDLISA. Over 33–71 the chain is Extracellular; the sequence is ETEMEGEGNETGECTGSYYCKKGVILPIWEPQDPSFGDK. The N-linked (GlcNAc...) asparagine glycan is linked to Asn-41. The helical transmembrane segment at 72–92 threads the bilayer; the sequence is IARATVYFVAMVYMFLGVSII. At 93–133 the chain is on the cytoplasmic side; sequence ADRFMSSIEVITSQEKEITIKKPNGETTKTTVRIWNETVSN. A helical transmembrane segment spans residues 134–154; that stretch reads LTLMALGSSAPEILLSVIEVC. Residues 138-178 form an Alpha-1 repeat; sequence ALGSSAPEILLSVIEVCGHNFTAGDLGPSTIVGSAAFNMFI. The Extracellular portion of the chain corresponds to 155–167; it reads GHNFTAGDLGPST. Asn-157 is a glycosylation site (N-linked (GlcNAc...) asparagine). A helical transmembrane segment spans residues 168–188; the sequence is IVGSAAFNMFIIIALCVYVVP. At 189-201 the chain is on the cytoplasmic side; it reads DGETRKIKHLRVF. A helical transmembrane segment spans residues 202 to 222; it reads FVTAAWSIFAYTWLYIILSVI. Topologically, residues 223–228 are extracellular; sequence SPGVVE. Residues 229 to 249 traverse the membrane as a helical segment; the sequence is VWEGLLTFFFFPICVVFAWVA. Over 250 to 797 the chain is Cytoplasmic; the sequence is DRRLLFYKYV…FVPPTEYWNG (548 aa). Residues 251 to 270 are putative calmodulin-binding region; that stretch reads RRLLFYKYVYKRYRAGKQRG. A phosphoserine mark is found at Ser-282 and Ser-389. 2 consecutive Calx-beta domains span residues 393–493 and 524–624; these read VNTE…VHLS and ATVT…LEIG. The Ca(2+) site is built by Glu-417, Asp-453, Asp-478, Asp-479, Ile-481, Glu-483, Glu-486, Asp-530, Asp-531, Asp-532, Glu-548, Asp-584, Asp-610, Glu-611, Glu-612, and Glu-715. Residues 798 to 818 form a helical membrane-spanning segment; that stretch reads WACFIVSILMIGILTAFIGDL. At 819–821 the chain is on the extracellular side; that stretch reads ASH. Residues 822 to 842 traverse the membrane as a helical segment; that stretch reads FGCTIGLKDSVTAVVFVALGT. Residues 839–875 form an Alpha-2 repeat; the sequence is ALGTSVPDTFASKVAATQDQYADASIGNVTGSNAVNV. Topologically, residues 843–871 are cytoplasmic; it reads SVPDTFASKVAATQDQYADASIGNVTGSN. The helical transmembrane segment at 872–892 threads the bilayer; it reads AVNVFLGIGVAWSIAAIYHAA. Topologically, residues 893–903 are extracellular; sequence NGEQFKVSPGT. Residues 904–924 form a helical membrane-spanning segment; sequence LAFSVTLFTIFAFINVGVLLY. The Cytoplasmic segment spans residues 925–941; the sequence is RRRPEIGGELGGPRTAK. The chain crosses the membrane as a helical span at residues 942 to 962; sequence LLTSCLFVLLWLLYIFFSSLE. Residues 963–970 lie on the Extracellular side of the membrane; the sequence is AYCHIKGF.

It belongs to the Ca(2+):cation antiporter (CaCA) (TC 2.A.19) family. SLC8 subfamily. As to expression, cardiac sarcolemma (at protein level).

It localises to the cell membrane. The protein resides in the sarcolemma. The catalysed reaction is Ca(2+)(in) + 3 Na(+)(out) = Ca(2+)(out) + 3 Na(+)(in). Activated by micromolar levels of Ca(2+). In the absence of regulatory Ca(2+), channels open rapidly, and then inactivate rapidly. Inactivation is enhanced by Na(+) and is inhibited by micromolar levels of Ca(2+). Functionally, mediates the exchange of one Ca(2+) ion against three to four Na(+) ions across the cell membrane, and thereby contributes to the regulation of cytoplasmic Ca(2+) levels and Ca(2+)-dependent cellular processes. Contributes to Ca(2+) transport during excitation-contraction coupling in muscle. In a first phase, voltage-gated channels mediate the rapid increase of cytoplasmic Ca(2+) levels due to release of Ca(2+) stores from the endoplasmic reticulum. SLC8A1 mediates the export of Ca(2+) from the cell during the next phase, so that cytoplasmic Ca(2+) levels rapidly return to baseline. Required for normal embryonic heart development and the onset of heart contractions. In Canis lupus familiaris (Dog), this protein is Sodium/calcium exchanger 1 (SLC8A1).